We begin with the raw amino-acid sequence, 1108 residues long: Probable arabinosyltransferase A (1108 aa).

13 helical membrane passes run 12 to 34 (IPRS…VPLL), 204 to 223 (IVMV…LAVL), 258 to 280 (VGLA…HVVG), 334 to 356 (VWMR…HWVL), 368 to 387 (ANRV…WLPF), 397 to 414 (IALG…AIAL), 421 to 443 (AVAV…AVAA), 463 to 482 (GLLA…LVVV), 531 to 553 (FAVL…RGHV), 582 to 604 (WAVQ…AFAC), 616 to 638 (TLYV…GWFY), 653 to 675 (IASH…LAAW), and 696 to 718 (VLAS…ASLT). The disordered stretch occupies residues 804–825 (PGLVNSDASPNKPNVAYSDSAG).

Belongs to the emb family.

The protein localises to the cell membrane. Its function is as follows. Arabinosyl transferase responsible for the polymerization of arabinose into the arabinan of arabinogalactan. This is Probable arabinosyltransferase A (embA) from Mycobacterium avium.